The sequence spans 201 residues: MSKVLVVKSSILATFSQSNPLADHFIDQWREQHLNDDITVRDLGAQPVPELDGELVGALRPSDATLTQRQQQALELSDALIGELQANDVLVFTAPMYNFAIPSKLKNYFDLIARASVTFRYSEQGPERLVKNKRALILTTRDGIHKDTSSDLVTHYLRLFLGFIGITDVSFIYAEGVAYGPEAAVKAQEEAKASIQSFVSA.

Residues serine 10, 16–18 (SQS), and 96–99 (MYNF) each bind FMN.

Belongs to the azoreductase type 1 family. As to quaternary structure, homodimer. Requires FMN as cofactor.

The enzyme catalyses 2 a quinone + NADH + H(+) = 2 a 1,4-benzosemiquinone + NAD(+). It catalyses the reaction N,N-dimethyl-1,4-phenylenediamine + anthranilate + 2 NAD(+) = 2-(4-dimethylaminophenyl)diazenylbenzoate + 2 NADH + 2 H(+). Functionally, quinone reductase that provides resistance to thiol-specific stress caused by electrophilic quinones. Also exhibits azoreductase activity. Catalyzes the reductive cleavage of the azo bond in aromatic azo compounds to the corresponding amines. The polypeptide is FMN-dependent NADH:quinone oxidoreductase (Sodalis glossinidius (strain morsitans)).